A 578-amino-acid polypeptide reads, in one-letter code: Suppressor of smlA (578 aa).

Involved in regulation of group size of aggregation streams. This chain is Suppressor of smlA (sslA1), found in Dictyostelium discoideum (Social amoeba).